Reading from the N-terminus, the 406-residue chain is Phosphopentomutase (406 aa).

Mn(2+) contacts are provided by D10, D305, H310, D346, H347, and H358.

It belongs to the phosphopentomutase family. The cofactor is Mn(2+).

It is found in the cytoplasm. It catalyses the reaction 2-deoxy-alpha-D-ribose 1-phosphate = 2-deoxy-D-ribose 5-phosphate. The enzyme catalyses alpha-D-ribose 1-phosphate = D-ribose 5-phosphate. Its pathway is carbohydrate degradation; 2-deoxy-D-ribose 1-phosphate degradation; D-glyceraldehyde 3-phosphate and acetaldehyde from 2-deoxy-alpha-D-ribose 1-phosphate: step 1/2. Functionally, isomerase that catalyzes the conversion of deoxy-ribose 1-phosphate (dRib-1-P) and ribose 1-phosphate (Rib-1-P) to deoxy-ribose 5-phosphate (dRib-5-P) and ribose 5-phosphate (Rib-5-P), respectively. The chain is Phosphopentomutase from Rhizobium meliloti (strain 1021) (Ensifer meliloti).